A 150-amino-acid chain; its full sequence is Placenta-specific protein 4 (150 aa).

Expressed in placental syncytiotrophoblast and choriocarcinoma cells.

This is Placenta-specific protein 4 (PLAC4) from Homo sapiens (Human).